We begin with the raw amino-acid sequence, 147 residues long: Cytochrome c' (147 aa).

The signal sequence occupies residues 1–21; sequence MKRMMIVAALAALTTTTVAQA. 6 residues coordinate heme c: Arg-31, Thr-87, Glu-88, Cys-137, Cys-140, and His-141.

In terms of assembly, homodimer. Binds 1 heme c group covalently per subunit.

Functionally, cytochrome c' is the most widely occurring bacterial c-type cytochrome. Cytochromes c' are high-spin proteins and the heme has no sixth ligand. Their exact function is not known. The polypeptide is Cytochrome c' (Rhodospirillum rubrum (strain ATCC 11170 / ATH 1.1.1 / DSM 467 / LMG 4362 / NCIMB 8255 / S1)).